Reading from the N-terminus, the 532-residue chain is Mitogen-activated protein kinase kinase mkk1 (532 aa).

Positions 235 to 505 (IVELGGLGEG…PWKMLEHPWM (271 aa)) constitute a Protein kinase domain. ATP-binding positions include 241–249 (LGEGAGGAV) and lysine 264. The active-site Proton acceptor is the aspartate 362.

It belongs to the protein kinase superfamily. STE Ser/Thr protein kinase family. MAP kinase kinase subfamily.

The catalysed reaction is L-seryl-[protein] + ATP = O-phospho-L-seryl-[protein] + ADP + H(+). It catalyses the reaction L-threonyl-[protein] + ATP = O-phospho-L-threonyl-[protein] + ADP + H(+). Functionally, mitogen-activated protein kinase kinase, part of the mkh1-mkk1-spm1 MAPK cascade that regulates regulates vegetative growth, conidial formation, colony surface hydrophobicity, osmotic stress, cell wall integrity maintenance, carbon and nitrogen source utilization, chitin distribution, septa formation, and pathogenicity. This Cytospora mali (Apple Valsa canker fungus) protein is Mitogen-activated protein kinase kinase mkk1.